Here is a 648-residue protein sequence, read N- to C-terminus: Fidgetin-like protein 2 (648 aa).

Residues Met-1 to Pro-36 are disordered. The segment covering Pro-10–Ser-27 has biased composition (polar residues). ATP-binding positions include Ala-394 and Gly-434–Leu-439.

The protein belongs to the AAA ATPase family. Mg(2+) is required as a cofactor.

It is found in the cytoplasm. The protein resides in the cell cortex. It catalyses the reaction ATP + H2O = ADP + phosphate + H(+). Functionally, microtubule-severing enzyme that negatively regulates cell migration and wound healing. In migrating cells, targets dynamic microtubules (MTs) at the leading edge and severs them, thereby suppressing motility. Microtubule severing releases ARHGEF2 which activates RHOA, which in turn regulates focal ahesion turnover via focal adhesion kinase, as opposed to F-actin polymerization, to suppress cell motility. Negative regulator of axon regeneration that suppresses axonal growth by selectively severing dynamic MTs in the distal axon shaft and growth cone. Contributes to proper cell branching during endothelial and neuronal development. The protein is Fidgetin-like protein 2 (Fignl2) of Rattus norvegicus (Rat).